A 2569-amino-acid polypeptide reads, in one-letter code: MVVKFANGVRNRGNGDEGQRGTQRPLSTPIAIVGMSCRFAGGATSPSNLWGLLSEGKDAWSPVPTDRFDASSLYHPDQQRTDRHHIQGGYFLDGDVTRFDAPFFNLSAEAASSMDPQLRLSMEGVFEALENAGIPLGKIAGTNTSVFSGTFGRDYTDRLVKDPETLPPSYFTGNGAAMYSNRISHFFDLKGQSVTTDTGCSGSMAALHLAAQTIRTGESDMSIVAVAQFMMNPDLYIALSNLGVLSPQGKCLPWDHRANGYGRGEGMAVVILKRLDLALKDGDHIHSVIRESAMNQDGKTSTITTPAKEAQQTLIRDCYSRAGLSLSETAYIEAHMTGTPTGDPIEAESLAKTFGAARAAGDSVYVGSIKANIGHTEPVSGLASIIKTALVLQHQQIPPHLNYEKSNPAIPLQDWNLKLPLSLIGWPEGAPLRASVNNFGYGGTNVHVIMEAAPVSTAKTLHTSEFNTINEVESQQIGPTEASPSYVYIISSRHSAGGLEMGESLALHIRDSIMRDQKPRAIDLAYTLAERRTRFAWTTVVKATSIEELADKLEETLRKPIRATTIPRLGFIFNGQGAQWYAMGRELLARYPVFQSAVRHCDHILTQIYQAPWSLYEELSRDEASSRIHDAEISQPANVAIQLCLVDLLTSWNVMPTAVVSHSSGEIAAAYAAGILSFKEALGVAYYRGFLLAAHCTGDALQGGMMAVRLSVDDVQGYIKSTSSGKVVIACVNSPSSVTLSGDIDALTELASMLEDDAVPARKLNVPLAYHSHHMNPIAKSYQNRLDVLLDTGKVPKILVASPVTGELVSHGETLDSKHWVKNLVSPVLFSEALESMVFGSKNVDRHSSSGTQSMNVDILIEVGAHSTLSGAVRETLGNAQLPYLSCLRRNIDAVSTMQDVACDLLVRGYPVSLAGVNFLEGQELNFVHDLPTYAWDHSTSYLVEPRASRQNRYRRFPSHELLGSSVPGASSLTPTWRNFLRVQDLEWLADHQLESKIVFPAAGYISMAIEAVRRLKLSSGAREEPTSYRLRDIDFMTALLISSGQSGTEVVFTLRDCSDKELDYRGWYEFELFSISPSDAWIRHCTGYVSAEDSSKNLKATRALSSDVERVAVADRVRHVRPDAMFAGLRKTGIYHGPAFQNLIGSKITGSSSDTSFMLSPKALAKDEEYVLHPTTLDSIFQTCYFSLPEEAQDRAMMVPKSIGSLTVPRDFGRQNDNKLQSRVRLLHCTSRDAAFKGTVVQAKMSEEADVPLLMHNLRLQKIQAEDDNAGKLFRVHSQGRWEPDILHDVPAKTKASMQIVLSDSGLSDEKDFREAAYHLMFECLAQLQHEESKGWQPFHKRYHHWLQTIVKSVETGQLAHAAALEAHEWLDRSEAAKRSILEKVAAMNAGGELLVKIGRHLTQIIRGDITPLELMMENGLLQRYYTELPQFNNTYQQLRKVLEHYAIKEPGAKILEVGAGTGGATLHALQAFAAMDETNSSKTLLGHYDYTDVSADFFPEAKKKFASWEGRMNFARLNIEIDPIQQGFTAGSYDLIIASQVLHATVSLANTLSNVRKLLKPKGKLIFLEGTQHSIDLELIFGTLPGWWLGEEPERQMSAIADVPTWDRFLKSSGFSGVDMNIGNCEQPEVQVSSVLIATAAAEPSYPSSISIIWGRNAPLAWRKELATAIAAKTGTAPRHETLKDVCPDETTLYLVAIELEYDLVSSMNQVTFEKLRHLLVSSMGIFWVSGGGLIDSQKPLWGLTPGLLRTFRREDMNKRCVHLDFDVSKDLWNAETTNHIMHVFEEGFDYSLENSNMDWEYAVKNSELHVLRYYPDVELDMRCSGIKPMPEHRLWYDDERDLQYQVPEGSGDLLNKIEFLEVPRLVDDVPFGMVEIETKAFGLNFQDLMLALGFVKDVLTLTHEGAGFVKRLGPGTERSGLRIGDRICGAFRGSFASTSMAWWTNIVKIPDEMSWEEAAAFSVAYLTVHVGLDHVARLQKEERILIHSAAGGVGQAAIMWAQHVGAEIFATCGTETKRQFLMDTYNISADHIFSSRDACFASEIIDRTGEQGVDVVLNSLGGPLLKASWGCLADFGRFVEIGKVDLHAAKRLDMTPFGRNITMAGVDLVAYSELRGMVIHNALVALMKLYRSGHLRSLRPITRFNISDMGAAMKHMQSGTHMGKIVLTIEPTAVVNVSPRITSLDLANMNVTHLIVGGLRGVGHAIALRMIEKGARNVLAISRNASSHPNRLELQKTADQHGCKLVIRDCDISSAEELVEIVGSLGDLHMPPIGGVLQAAMVLDDTVLERMSYEQWQTAVRPKVAGTLNLHNNLPGLRYFIMLSSGTAITGNVSQANYAAGNTFQDTLARHRTLHGEPAISINLGPVDDVGYVAEQGEDVLKRVDKAVTSMSLSVNHVMQLIEGGIIDPLKKTGDKSQIITCFPRYEALPDNQGVKDDKRFGTLRLGDEGVASTGGNGLSASRVNELTQELVSNGRSTGESAARKLVSELITEELSELFSIDPNDIDPGMPLTHHGVDSLVAVRVRNWLISEVKARVAIFEILQSPSLTDFAALVASRSSLITSCV.

Residues 1–25 (MVVKFANGVRNRGNGDEGQRGTQRP) form a disordered region. A Ketosynthase family 3 (KS3) domain is found at 27–452 (STPIAIVGMS…GTNVHVIMEA (426 aa)). Residues Cys200, His335, and His375 each act as for beta-ketoacyl synthase activity in the active site. The interval 572 to 892 (IFNGQGAQWY…PYLSCLRRNI (321 aa)) is malonyl-CoA:ACP transacylase (MAT) domain. Residues 960 to 1097 (HELLGSSVPG…GYVSAEDSSK (138 aa)) are N-terminal hotdog fold. Residues 960–1268 (HELLGSSVPG…LRLQKIQAED (309 aa)) are dehydratase (DH) domain. Positions 960–1270 (HELLGSSVPG…LQKIQAEDDN (311 aa)) constitute a PKS/mFAS DH domain. Catalysis depends on His992, which acts as the Proton acceptor; for dehydratase activity. Residues 1117-1270 (RVRHVRPDAM…LQKIQAEDDN (154 aa)) form a C-terminal hotdog fold region. The Proton donor; for dehydratase activity role is filled by Asp1179. Positions 1457 to 1567 (LEVGAGTGGA…RKLLKPKGKL (111 aa)) are methyltransferase (CMet) domain. The interval 1855 to 2170 (DLLNKIEFLE…SGTHMGKIVL (316 aa)) is enoyl reductase (ER) domain. The tract at residues 2195-2371 (THLIVGGLRG…AISINLGPVD (177 aa)) is ketoreductase (KR) domain. The Carrier domain occupies 2485–2562 (AARKLVSELI…DFAALVASRS (78 aa)). Ser2522 carries the O-(pantetheine 4'-phosphoryl)serine modification.

Functionally, highly reducing polyketide synthase; part of the gene cluster that mediates the biosynthesis of abscisic acid (ABA), a phytohormone that acts antagonistically toward salicylic acid (SA), jasmonic acid (JA) and ethylene (ETH) signaling, to impede plant defense responses. The first step of the pathway catalyzes the reaction from farnesyl diphosphate to alpha-ionylideneethane performed by the alpha-ionylideneethane synthase abl3 via a three-step reaction mechanism involving 2 neutral intermediates, beta-farnesene and allofarnesene. The cytochrome P450 monooxygenase abl1 might then be involved in the conversion of alpha-ionylideneethane to alpha-ionylideneacetic acid. Alpha-ionylideneacetic acid is further converted to abscisic acid in 2 steps involving the cytochrome P450 monooxygenase abl2 and the short-chain dehydrogenase/reductase abl4, via the intermediates 1'-deoxy-ABA or 1',4'-trans-diol-ABA, depending on the order of action of these 2 enzymes. Abl2 is responsible for the hydroxylation of carbon atom C-1' and abl4 might be involved in the oxidation of the C-4' carbon atom. Pks5 is clearly not involved in the production of ABA. Nonetheless, the possibility cannot be excluded that pks5 may modify ABA into another compound. It also cannot be excluded the possibility that pks5 also has a function completely independent of ABA synthesis. Pks5 is not required for pathogenicity on B.napus cotyledon. The protein is Highly reducing polyketide synthase pks5 of Leptosphaeria maculans (strain JN3 / isolate v23.1.3 / race Av1-4-5-6-7-8) (Blackleg fungus).